We begin with the raw amino-acid sequence, 78 residues long: Large ribosomal subunit protein bL28 (78 aa).

The protein belongs to the bacterial ribosomal protein bL28 family.

The sequence is that of Large ribosomal subunit protein bL28 from Pasteurella multocida (strain Pm70).